We begin with the raw amino-acid sequence, 130 residues long: Small ribosomal subunit protein uS9 (130 aa).

This sequence belongs to the universal ribosomal protein uS9 family.

The polypeptide is Small ribosomal subunit protein uS9 (Xanthomonas axonopodis pv. citri (strain 306)).